A 262-amino-acid polypeptide reads, in one-letter code: tRNA pseudouridine synthase A (262 aa).

Residue D54 is the Nucleophile of the active site. Y113 is a binding site for substrate.

The protein belongs to the tRNA pseudouridine synthase TruA family. Homodimer.

It carries out the reaction uridine(38/39/40) in tRNA = pseudouridine(38/39/40) in tRNA. Formation of pseudouridine at positions 38, 39 and 40 in the anticodon stem and loop of transfer RNAs. This Lactobacillus delbrueckii subsp. bulgaricus (strain ATCC BAA-365 / Lb-18) protein is tRNA pseudouridine synthase A.